A 278-amino-acid polypeptide reads, in one-letter code: Orotidine 5'-phosphate decarboxylase (278 aa).

Residues Asp40, 62–64, 93–102, Tyr228, and Arg246 each bind substrate; these read KTH and DRKFIDIGNT. The Proton donor role is filled by Lys95.

It belongs to the OMP decarboxylase family.

It catalyses the reaction orotidine 5'-phosphate + H(+) = UMP + CO2. It participates in pyrimidine metabolism; UMP biosynthesis via de novo pathway; UMP from orotate: step 2/2. This Passalora fulva (Tomato leaf mold) protein is Orotidine 5'-phosphate decarboxylase (PYR1).